The primary structure comprises 874 residues: Probable inorganic carbon transporter subunit DabA (874 aa).

Positions 398, 400, 580, and 595 each coordinate Zn(2+).

The protein belongs to the inorganic carbon transporter (TC 9.A.2) DabA family. In terms of assembly, forms a complex with DabB. Requires Zn(2+) as cofactor.

Its subcellular location is the cell membrane. In terms of biological role, part of an energy-coupled inorganic carbon pump. The polypeptide is Probable inorganic carbon transporter subunit DabA (Bacillus cereus (strain 03BB102)).